The chain runs to 624 residues: Na(+)/H(+) antiporter NhaA (624 aa).

The segment at 1–164 (MNPELPPNHL…TFFINGRRYD (164 aa)) is unknown. A na(+)/H(+) antiporter NhaA region spans residues 165 to 624 (GPWDVRSLSE…NAQAEEEKNP (460 aa)). 11 consecutive transmembrane segments (helical) span residues 199–219 (GIML…ALGP), 240–260 (LSLR…VVGL), 279–299 (LPIA…LILV), 319–339 (GWGV…AMMG), 348–368 (VFLT…VAIF), 371–391 (GELH…LALL), 407–427 (IVLW…GIIL), 497–517 (FLVL…TSVF), 521–541 (IPLM…GFIT), 565–585 (GAGA…SQAF), and 596–616 (IAIF…LWNA).

It belongs to the NhaA Na(+)/H(+) (TC 2.A.33) antiporter family.

The protein resides in the cell inner membrane. It catalyses the reaction Na(+)(in) + 2 H(+)(out) = Na(+)(out) + 2 H(+)(in). Its function is as follows. Na(+)/H(+) antiporter that extrudes sodium in exchange for external protons. In Nitrosospira multiformis (strain ATCC 25196 / NCIMB 11849 / C 71), this protein is Na(+)/H(+) antiporter NhaA.